The sequence spans 307 residues: Pantothenate kinase (307 aa).

ATP is bound at residue 90-97 (GSVAVGKS).

Belongs to the prokaryotic pantothenate kinase family.

It localises to the cytoplasm. The catalysed reaction is (R)-pantothenate + ATP = (R)-4'-phosphopantothenate + ADP + H(+). It functions in the pathway cofactor biosynthesis; coenzyme A biosynthesis; CoA from (R)-pantothenate: step 1/5. This is Pantothenate kinase from Limosilactobacillus fermentum (strain NBRC 3956 / LMG 18251) (Lactobacillus fermentum).